The chain runs to 206 residues: Macrophage immunometabolism regulator (206 aa).

Met-1 bears the N-acetylmethionine mark. Positions Met-1–Cys-41 are disordered. Phosphoserine occurs at positions 25, 140, and 167.

The protein belongs to the UNC119-binding protein family. Interacts with UNC119 and UNC119B; interaction preferentially takes place when UNC119 and UNC119B are unliganded with myristoylated proteins.

It localises to the cytoplasm. The protein resides in the cell projection. Its subcellular location is the cilium. Functionally, regulates the macrophage function, by enhancing the resolution of inflammation and wound repair functions mediated by M2 macrophages. The regulation of macrophage function is, due at least in part, to its ability to inhibit glycolysis. May also play a role in trafficking of proteins via its interaction with UNC119 and UNC119B cargo adapters: may help the release of UNC119 and UNC119B cargo or the recycling of UNC119 and UNC119B. May play a role in ciliary membrane localization via its interaction with UNC119B and protein transport into photoreceptor cells. This Pongo abelii (Sumatran orangutan) protein is Macrophage immunometabolism regulator (MACIR).